A 90-amino-acid polypeptide reads, in one-letter code: Translation initiation factor IF-1 (90 aa).

In terms of domain architecture, S1-like spans 15 to 90; sequence KKQKRKKEEV…TLGRIVFRHK (76 aa).

Belongs to the IF-1 family. Component of the 30S ribosomal translation pre-initiation complex which assembles on the 30S ribosome in the order IF-2 and IF-3, IF-1 and N-formylmethionyl-tRNA(fMet); mRNA recruitment can occur at any time during PIC assembly.

The protein resides in the cytoplasm. Its function is as follows. One of the essential components for the initiation of protein synthesis. Stabilizes the binding of IF-2 and IF-3 on the 30S subunit to which N-formylmethionyl-tRNA(fMet) subsequently binds. Helps modulate mRNA selection, yielding the 30S pre-initiation complex (PIC). Upon addition of the 50S ribosomal subunit IF-1, IF-2 and IF-3 are released leaving the mature 70S translation initiation complex. This chain is Translation initiation factor IF-1, found in Mycoplasma sp.